The primary structure comprises 1114 residues: MRSLFSSKLSRAPASPPPPPPHAAAGGGGDAHTPSSHGHRHRRFPKENVDPSPSPGPYDHHSAYRSPSGKQQQQQPLAAKNRSLPPRPPLKRKLLDVSAASPAPEGAPSGGGGGDSGVQVVVRVRPPSRAEEEDEGAGKEVCVRKTGPGSVEIHGQGFTFDSVADEASTQEDIFQLVGRPLVENCLDGFNSSIFAYGQTGSGKTYTMWGPLSALSDDTVSKERGLTPRVFELLFSRIKEEQAKHSNKQLVYHCCCSFLEIYNEQITDLLDPVQRNLQIREDVGTSSVYVESLTKESVFTINDVTQLLEKGLANRRTEATTANAESSRSHCVFTCFIKSESKNMEDGSNFTRTSRINLVDLAGSERQKLTNAAGDRLKEAGNINRSLSQLGNLINILAEVSQSGKQRHHIPYRDSKLTFLLQESLGGNAKLAMICAVSPSQNCKSETLSTLRFAHRAKDIKNNAVVNEQREDDVNVLREQIRQLKEELQHVRSNGSLPGSNGSPSTGWNSQNSFLLKMSLSRPTAFPTIKDDSDEEMEIDDNDVEKPCNLENKSSFPHGDVETSRCKSNLAASIQKGLQVIESHRNSVTWRRSSLGLNTRLMDAHLSVPVCKVDVAIQTDPEESEPRQNTMALIPSNQPEATTDGNREISDCINLQLVTVDGSIPSNDLKQQEQVFKAVEKVLAGAIRREMLRDEQCAKQAAEIQQLKRLVQQYKHERECNAAIAQIREEKIARLETLVDGILPTEELMHAENLSLQDENKILHQKYENHPEVLSAKIELERIQEELERYRNFKDEKEVLLEEIQHLKNQLHYMLSSSMALCRPPVELVQAISTVSDRPTISALEEAGDDGHSIVDAAESRWITLTEELRVELEKSKSLSERLQLEVESEKQCSEELKGALEMAMQGHARILEQYCELQEKHASLLSMCRTINDGIEDVKKEAAKAGVRGAESKFINALARQVSILRAEREKERRFWMDENKGLQQQLSDTAEAVQAAGELLVRLNDAEEAASLAQKRAELAEQEMNKAFAEIDNLKRDHDQEVLVLNQRLAESKLPSNVVQSPEPSETGPARYDTGGSFGDEQWREEFKPFQSVEVSKSSDPSSWFYGYDKCNI.

Positions 1–119 (MRSLFSSKLS…GGGGGDSGVQ (119 aa)) are disordered. The span at 98-107 (SAASPAPEGA) shows a compositional bias: low complexity. The 343-residue stretch at 117–459 (GVQVVVRVRP…LRFAHRAKDI (343 aa)) folds into the Kinesin motor domain. Residue 197–204 (GQTGSGKT) coordinates ATP. Coiled coils occupy residues 772-810 (VLSAKIELERIQEELERYRNFKDEKEVLLEEIQHLKNQL) and 999-1043 (ELLV…DQEV). The segment covering 1055-1065 (LPSNVVQSPEP) has biased composition (polar residues). Positions 1055–1081 (LPSNVVQSPEPSETGPARYDTGGSFGD) are disordered.

This sequence belongs to the TRAFAC class myosin-kinesin ATPase superfamily. Kinesin family. KIN-12 subfamily.

The chain is Kinesin-like protein KIN-12B from Oryza sativa subsp. japonica (Rice).